The primary structure comprises 188 residues: GMP synthase [glutamine-hydrolyzing] subunit A (188 aa).

The region spanning 1–188 (MIVILDNGGQ…FCKVCGYKFE (188 aa)) is the Glutamine amidotransferase type-1 domain. Cys-76 serves as the catalytic Nucleophile. Residues His-163 and Glu-165 contribute to the active site.

Heterodimer composed of a glutamine amidotransferase subunit (A) and a GMP-binding subunit (B).

It catalyses the reaction XMP + L-glutamine + ATP + H2O = GMP + L-glutamate + AMP + diphosphate + 2 H(+). It functions in the pathway purine metabolism; GMP biosynthesis; GMP from XMP (L-Gln route): step 1/1. Its function is as follows. Catalyzes the synthesis of GMP from XMP. This is GMP synthase [glutamine-hydrolyzing] subunit A from Methanocaldococcus jannaschii (strain ATCC 43067 / DSM 2661 / JAL-1 / JCM 10045 / NBRC 100440) (Methanococcus jannaschii).